Reading from the N-terminus, the 156-residue chain is MSKNVSRTVEQLAEPIVRELHLELVEVEYKKEGPNWYLRVFIDADRGVNLDDCEAVSEKLSEVLDEVDPIKEAYFLEVSSPGAERPLKKEADVKKAVGKGVYVTTYEPIDGQKAFEGVLVSFEDATLVIEGKNKTRTVTYTVPYAKVANARLSILL.

It belongs to the RimP family.

Its subcellular location is the cytoplasm. Required for maturation of 30S ribosomal subunits. In Shouchella clausii (strain KSM-K16) (Alkalihalobacillus clausii), this protein is Ribosome maturation factor RimP.